The following is a 357-amino-acid chain: Probable butyrate kinase (357 aa).

This sequence belongs to the acetokinase family.

Its subcellular location is the cytoplasm. It catalyses the reaction butanoate + ATP = butanoyl phosphate + ADP. The chain is Probable butyrate kinase from Thermotoga petrophila (strain ATCC BAA-488 / DSM 13995 / JCM 10881 / RKU-1).